The following is a 409-amino-acid chain: Putative competence-damage inducible protein (409 aa).

This sequence belongs to the CinA family.

The protein is Putative competence-damage inducible protein of Clostridium botulinum (strain Loch Maree / Type A3).